The primary structure comprises 373 residues: 3 beta-hydroxysteroid dehydrogenase/Delta 5--&gt;4-isomerase (373 aa).

Tyr155 serves as the catalytic Proton acceptor. Lys159 is a binding site for NAD(+). Residues Ile288–Ile308 traverse the membrane as a helical segment.

It belongs to the 3-beta-HSD family.

The protein localises to the endoplasmic reticulum membrane. It localises to the mitochondrion membrane. It catalyses the reaction a 3beta-hydroxy-Delta(5)-steroid + NAD(+) = a 3-oxo-Delta(5)-steroid + NADH + H(+). The catalysed reaction is a 3-oxo-Delta(5)-steroid = a 3-oxo-Delta(4)-steroid. It functions in the pathway lipid metabolism; steroid biosynthesis. Its function is as follows. 3-beta-HSD is a bifunctional enzyme, that catalyzes the oxidative conversion of Delta(5)-ene-3-beta-hydroxy steroid, and the oxidative conversion of ketosteroids. The 3-beta-HSD enzymatic system plays a crucial role in the biosynthesis of all classes of hormonal steroids. This chain is 3 beta-hydroxysteroid dehydrogenase/Delta 5--&gt;4-isomerase (HSD3B), found in Bos taurus (Bovine).